A 241-amino-acid chain; its full sequence is Small ribosomal subunit protein uS2 (241 aa).

It belongs to the universal ribosomal protein uS2 family.

The protein is Small ribosomal subunit protein uS2 of Klebsiella pneumoniae subsp. pneumoniae (strain ATCC 700721 / MGH 78578).